A 144-amino-acid polypeptide reads, in one-letter code: Putative pre-16S rRNA nuclease (144 aa).

This sequence belongs to the YqgF nuclease family.

The protein resides in the cytoplasm. Functionally, could be a nuclease involved in processing of the 5'-end of pre-16S rRNA. This chain is Putative pre-16S rRNA nuclease, found in Picosynechococcus sp. (strain ATCC 27264 / PCC 7002 / PR-6) (Agmenellum quadruplicatum).